The sequence spans 852 residues: Bifunctional isopimaradiene synthase, chloroplastic (852 aa).

The transit peptide at 1–53 (HHLTANTQSIPHFSTTLNAGSSARKRRSLYLRWGKGSNKIIACVGEGATSVPY) directs the protein to the chloroplast. K252 lines the substrate pocket. 2 residues coordinate Mg(2+): D385 and D387. The DXDD motif motif lies at 385 to 388 (DIDD). K472 contacts substrate. Residues D604, D608, N748, T752, and E756 each coordinate Mg(2+). The short motif at 604–608 (DDLYD) is the DDXXD motif element.

Belongs to the terpene synthase family. Tpsd subfamily. Mg(2+) is required as a cofactor.

The protein resides in the plastid. It localises to the chloroplast. The catalysed reaction is (2E,6E,10E)-geranylgeranyl diphosphate = (+)-copalyl diphosphate. It catalyses the reaction (+)-copalyl diphosphate = isopimara-7,15-diene + diphosphate. The protein operates within terpene metabolism; oleoresin biosynthesis. Involved in defensive oleoresin formation in conifers in response to insect attack or other injury. Involved in diterpene (C20) olefins biosynthesis. Bifunctional enzyme that catalyzes two sequential cyclizations of geranylgeranyl diphosphate (GGPP) to isopimara-7,15-diene. The polypeptide is Bifunctional isopimaradiene synthase, chloroplastic (TPS-ISO) (Abies balsamea (Balsam fir)).